A 552-amino-acid polypeptide reads, in one-letter code: CCR4-NOT transcription complex subunit 6 (552 aa).

LRR repeat units follow at residues 52–73 (HLTA…IAKL), 75–96 (NLVY…LGNM), 98–120 (SLRE…GKLF), and 121–143 (QLQT…CLEP). The nuclease domain stretch occupies residues 153 to 552 (LLDNLSVSTE…VNGIHLPGRR (400 aa)). Glu235 is a binding site for Mg(2+). 4 residues coordinate substrate: Glu235, Glu271, His356, and Pro361. Mg(2+) is bound at residue Asp407. Asp407 serves as the catalytic Proton donor/acceptor. The substrate site is built by Asn409, Asn476, and Phe481.

Belongs to the CCR4/nocturin family. Subunit of the CCR4-NOT core complex. Mg(2+) is required as a cofactor.

Its subcellular location is the cytoplasm. It localises to the nucleus. The enzyme catalyses Exonucleolytic cleavage of poly(A) to 5'-AMP.. Functionally, poly(A) nuclease involved in mRNA decay. Has 3'-5' RNase activity. The CCR4-NOT complex functions as a general transcription regulation complex. Enhances ligand-dependent transcriptional activity of nuclear hormone receptors. This Xenopus laevis (African clawed frog) protein is CCR4-NOT transcription complex subunit 6 (cnot6).